A 159-amino-acid chain; its full sequence is 6,7-dimethyl-8-ribityllumazine synthase (159 aa).

5-amino-6-(D-ribitylamino)uracil contacts are provided by residues Trp-27, 62–64 (SWE), and 86–88 (VLI). Residue 91-92 (ST) participates in (2S)-2-hydroxy-3-oxobutyl phosphate binding. His-94 serves as the catalytic Proton donor. A 5-amino-6-(D-ribitylamino)uracil-binding site is contributed by Leu-119. Arg-133 is a (2S)-2-hydroxy-3-oxobutyl phosphate binding site.

As to quaternary structure, homopentamer.

The catalysed reaction is (2S)-2-hydroxy-3-oxobutyl phosphate + 5-amino-6-(D-ribitylamino)uracil = 6,7-dimethyl-8-(1-D-ribityl)lumazine + phosphate + 2 H2O + H(+). It functions in the pathway cofactor biosynthesis; riboflavin biosynthesis; riboflavin from 2-hydroxy-3-oxobutyl phosphate and 5-amino-6-(D-ribitylamino)uracil: step 1/2. Its activity is regulated as follows. Competitively inhibited by riboflavin (Ki of 17 uM). Functionally, catalyzes the formation of 6,7-dimethyl-8-ribityllumazine by condensation of 5-amino-6-(D-ribitylamino)uracil with 3,4-dihydroxy-2-butanone 4-phosphate. This is the penultimate step in the biosynthesis of riboflavin. Also binds riboflavin with an unexpected high affinity. The chain is 6,7-dimethyl-8-ribityllumazine synthase (rib4) from Schizosaccharomyces pombe (strain 972 / ATCC 24843) (Fission yeast).